The chain runs to 1023 residues: GATOR2 complex protein WDR24 (1023 aa).

WD repeat units follow at residues 16-54 (NLGSPLSAISSSPDSTKLIVAGRDIVKIVSVQNNEFKVT), 64-108 (SLNY…SKSV), 114-154 (DHSR…NASK), 159-199 (PKSE…IAVE), 203-243 (SHQG…SLNN), 245-287 (STIS…IPLF), and 291-329 (DHRDVPTGLIWKSPSSLISCSKDSHLLLNEFQDSYKPYQ). Low complexity predominate over residues 563–578 (SKNIIDNSNDSNQEIN). 2 disordered regions span residues 563–621 (SKNI…EPPS) and 661–824 (QKST…SIEN). Positions 584-593 (KEDEEEDDDN) are enriched in acidic residues. The span at 661-681 (QKSTDNISDNNSNVHVNIKRQ) shows a compositional bias: polar residues. Low complexity predominate over residues 682 to 695 (NQPTNNNNNNSNID). The span at 696 to 742 (NLEKKSNKSKSTKENKESSLTDQNKQKRNDNKEKIDNNEIDNDNKDN) shows a compositional bias: basic and acidic residues. Positions 743 to 759 (NDDDDNDVDNIGEDNDE) are enriched in acidic residues. The span at 760–812 (INNNNDNNNNNNNNNNNNNNNNNNNNNNNNNNNNNNNNKNNNNDNNNNNNINN) shows a compositional bias: low complexity. The C4-type zinc-finger motif lies at 947–969 (ACSSCGKSIPQNSIICEKCNKAS). Cysteine 948, cysteine 951, cysteine 962, cysteine 965, cysteine 972, cysteine 975, cysteine 986, cysteine 989, histidine 991, histidine 994, histidine 997, cysteine 1010, cysteine 1014, histidine 1016, and cysteine 1018 together coordinate Zn(2+). The segment at 970–1021 (SKCSICRLPVKGMWVWCQGCGHGGHLEHMKSWFIDKNQKSCPTGCTHICTPF) adopts an RING-type; atypical zinc-finger fold.

It belongs to the WD repeat WDR24 family. Probably part of the GATOR complex.

It is found in the lysosome membrane. It catalyses the reaction S-ubiquitinyl-[E2 ubiquitin-conjugating enzyme]-L-cysteine + [acceptor protein]-L-lysine = [E2 ubiquitin-conjugating enzyme]-L-cysteine + N(6)-ubiquitinyl-[acceptor protein]-L-lysine.. The protein operates within protein modification; protein ubiquitination. Its function is as follows. As a component of the GATOR complex may function in the amino acid-sensing branch of the TORC1 signaling pathway. This chain is GATOR2 complex protein WDR24, found in Dictyostelium discoideum (Social amoeba).